The following is an 841-amino-acid chain: Potassium transport protein 1 (841 aa).

A run of 2 helical transmembrane segments spans residues 24 to 44 and 80 to 100; these read YIYI…GGTT and ILYG…ISFI. Residues N116 and N164 are each glycosylated (N-linked (GlcNAc...) asparagine). The disordered stretch occupies residues 173-192; sequence STNNPYFPDNPPSPKADISK. N215 and N401 each carry an N-linked (GlcNAc...) asparagine glycan. 7 consecutive transmembrane segments (helical) span residues 469-489, 507-527, 537-557, 600-620, 662-682, 715-735, and 747-767; these read MVTL…IVFA, GWWA…SLIP, IFLL…FPCF, WVLF…FMVL, AVLV…AINM, LSYD…CEGG, and IFTV…STGL. N771 is a glycosylation site (N-linked (GlcNAc...) asparagine).

This sequence belongs to the TrkH potassium transport family.

Its subcellular location is the cell membrane. In terms of biological role, together with TRK2, defines the major, high-affinity potassium influx transport system. Involved in maintenance of the proper sodium/potassium ratio in the cell and in regulating the plasma membrane potential. The chain is Potassium transport protein 1 (trk1) from Schizosaccharomyces pombe (strain 972 / ATCC 24843) (Fission yeast).